The primary structure comprises 134 residues: UPF0412 protein YaaI (134 aa).

The signal sequence occupies residues 1 to 23; that stretch reads MRSVLTISASLLFGLALSSVAHA.

It belongs to the UPF0412 family.

The polypeptide is UPF0412 protein YaaI (Salmonella choleraesuis (strain SC-B67)).